A 244-amino-acid polypeptide reads, in one-letter code: ATP-dependent dethiobiotin synthetase BioD 1 (244 aa).

12-17 (NVGKTV) lines the ATP pocket. Position 16 (Thr-16) interacts with Mg(2+). Residue Lys-37 is part of the active site. Asp-68 is an ATP binding site. Residues Asp-68 and Glu-126 each coordinate Mg(2+). ATP contacts are provided by residues 186–187 (NR), 215–217 (PYL), and Glu-222.

It belongs to the dethiobiotin synthetase family. In terms of assembly, homodimer. The cofactor is Mg(2+).

It localises to the cytoplasm. The catalysed reaction is (7R,8S)-7,8-diammoniononanoate + CO2 + ATP = (4R,5S)-dethiobiotin + ADP + phosphate + 3 H(+). It functions in the pathway cofactor biosynthesis; biotin biosynthesis; biotin from 7,8-diaminononanoate: step 1/2. Catalyzes a mechanistically unusual reaction, the ATP-dependent insertion of CO2 between the N7 and N8 nitrogen atoms of 7,8-diaminopelargonic acid (DAPA, also called 7,8-diammoniononanoate) to form a ureido ring. The protein is ATP-dependent dethiobiotin synthetase BioD 1 of Pasteurella multocida (strain Pm70).